The primary structure comprises 808 residues: Glycerol-3-phosphate acyltransferase (808 aa).

Residues 306–311 (HRSHMD) carry the HXXXXD motif motif.

This sequence belongs to the GPAT/DAPAT family.

The protein localises to the cell inner membrane. The catalysed reaction is sn-glycerol 3-phosphate + an acyl-CoA = a 1-acyl-sn-glycero-3-phosphate + CoA. Its pathway is phospholipid metabolism; CDP-diacylglycerol biosynthesis; CDP-diacylglycerol from sn-glycerol 3-phosphate: step 1/3. In Vibrio parahaemolyticus serotype O3:K6 (strain RIMD 2210633), this protein is Glycerol-3-phosphate acyltransferase.